The chain runs to 68 residues: Large ribosomal subunit protein uL29 (68 aa).

Belongs to the universal ribosomal protein uL29 family.

This is Large ribosomal subunit protein uL29 from Bradyrhizobium diazoefficiens (strain JCM 10833 / BCRC 13528 / IAM 13628 / NBRC 14792 / USDA 110).